Reading from the N-terminus, the 189-residue chain is Large ribosomal subunit protein uL5c (189 aa).

It belongs to the universal ribosomal protein uL5 family. As to quaternary structure, part of the 50S ribosomal subunit; contacts the 5S rRNA.

It is found in the plastid. Its subcellular location is the chloroplast. Its function is as follows. Binds 5S rRNA, forms part of the central protuberance of the 50S subunit. In Chara vulgaris (Common stonewort), this protein is Large ribosomal subunit protein uL5c (rpl5).